A 459-amino-acid chain; its full sequence is UDP-N-acetylmuramate--L-alanine ligase (459 aa).

Residue 118-124 participates in ATP binding; sequence GTHGKTT.

It belongs to the MurCDEF family.

Its subcellular location is the cytoplasm. The enzyme catalyses UDP-N-acetyl-alpha-D-muramate + L-alanine + ATP = UDP-N-acetyl-alpha-D-muramoyl-L-alanine + ADP + phosphate + H(+). It participates in cell wall biogenesis; peptidoglycan biosynthesis. Its function is as follows. Cell wall formation. This chain is UDP-N-acetylmuramate--L-alanine ligase, found in Clostridium beijerinckii (strain ATCC 51743 / NCIMB 8052) (Clostridium acetobutylicum).